A 420-amino-acid chain; its full sequence is tRNA (guanine-N(7)-)-methyltransferase non-catalytic subunit TRM82 (420 aa).

The segment covering 59 to 68 (KENDSKRQKS) has biased composition (basic and acidic residues). Residues 59-82 (KENDSKRQKSESGQAKVSKIPTPG) are disordered. 4 WD repeats span residues 87 to 127 (PIYN…DNCL), 179 to 220 (GHVS…VIKN), 224 to 266 (GHHE…AKIE), and 340 to 379 (SYED…EETN).

It belongs to the WD repeat TRM82 family. Forms a heterodimer with the catalytic subunit TRM8.

Its subcellular location is the nucleus. It participates in tRNA modification; N(7)-methylguanine-tRNA biosynthesis. In terms of biological role, required for the formation of N(7)-methylguanine at position 46 (m7G46) in tRNA. In the complex, it is required to stabilize and induce conformational changes of the catalytic subunit. The chain is tRNA (guanine-N(7)-)-methyltransferase non-catalytic subunit TRM82 from Meyerozyma guilliermondii (strain ATCC 6260 / CBS 566 / DSM 6381 / JCM 1539 / NBRC 10279 / NRRL Y-324) (Yeast).